The chain runs to 259 residues: MFFVLSPAKNLNEKDPCPVSEFTQPDLLAESEILMRQLRELAPQQIAELMHVSDKIALLNAERNAAWHTPFTPENAKQAVFMFNGDVYEGMDANTLNTNQIQYLQGHVRLLSGLYGLLRPLDLIQPYRLEMGTSFANLRGKNLYEFWGGIITNLLNDTLAQAGSNTLVNLASQEYFKSVNTKKLRARLITPIFKDEKNGKYKIISFYAKRARGLMVRYAAEHNITDPEMLKNFNYEGYAFNDAASNESEWVFMRSEQIK.

The protein belongs to the UPF0246 family.

The sequence is that of UPF0246 protein NGO_0461 from Neisseria gonorrhoeae (strain ATCC 700825 / FA 1090).